The following is a 269-amino-acid chain: GTP cyclohydrolase FolE2 (269 aa).

The protein belongs to the GTP cyclohydrolase IV family.

The catalysed reaction is GTP + H2O = 7,8-dihydroneopterin 3'-triphosphate + formate + H(+). Its pathway is cofactor biosynthesis; 7,8-dihydroneopterin triphosphate biosynthesis; 7,8-dihydroneopterin triphosphate from GTP: step 1/1. Its function is as follows. Converts GTP to 7,8-dihydroneopterin triphosphate. The chain is GTP cyclohydrolase FolE2 from Burkholderia vietnamiensis (strain G4 / LMG 22486) (Burkholderia cepacia (strain R1808)).